Reading from the N-terminus, the 462-residue chain is GTPase Der (462 aa).

EngA-type G domains are found at residues 9 to 171 (KTIA…NLNQ) and 201 to 372 (IQVG…ECFS). GTP is bound by residues 15–22 (GQPNVGKS), 62–66 (DTGGM), 123–126 (NKID), 207–214 (GRVNVGKS), 254–258 (DTAGI), and 318–321 (NKWD). Residues 373–457 (KRIPTSLLNS…PLILNAKDKK (85 aa)) form the KH-like domain.

This sequence belongs to the TRAFAC class TrmE-Era-EngA-EngB-Septin-like GTPase superfamily. EngA (Der) GTPase family. In terms of assembly, associates with the 50S ribosomal subunit.

GTPase that plays an essential role in the late steps of ribosome biogenesis. The sequence is that of GTPase Der from Helicobacter pylori (strain P12).